The following is a 545-amino-acid chain: Thermosome subunit (545 aa).

The protein belongs to the TCP-1 chaperonin family. Forms an oligomeric complex of eight-membered rings.

In terms of biological role, molecular chaperone; binds unfolded polypeptides in vitro, and has a weak ATPase activity. This chain is Thermosome subunit (ths), found in Desulfurococcus sp. (strain SY).